Here is a 147-residue protein sequence, read N- to C-terminus: Transmembrane protein 210 (147 aa).

Residues 1–31 form the signal peptide; sequence MAPCPQPESCPAGSPLGLICLSLLLIPASAG. Residues 32–47 are Extracellular-facing; that stretch reads TYCECSLGLSREALIA. The helical transmembrane segment at 48-68 threads the bilayer; it reads LIVVLAGVSASCFCALVVVAI. Over 69–147 the chain is Cytoplasmic; that stretch reads GVFRAKGDTC…PPPPPPPLPQ (79 aa). Positions 128–147 are disordered; the sequence is TMTAPLEPPPPPPPPPPLPQ. A compositionally biased stretch (pro residues) spans 133–147; the sequence is LEPPPPPPPPPPLPQ.

Its subcellular location is the membrane. The protein resides in the cytoplasmic vesicle. The protein localises to the secretory vesicle. It localises to the acrosome. The chain is Transmembrane protein 210 (Tmem210) from Mus musculus (Mouse).